We begin with the raw amino-acid sequence, 166 residues long: Phosphopantetheine adenylyltransferase (166 aa).

Residue S11 coordinates substrate. ATP contacts are provided by residues 11-12 (SF) and H19. K43, V80, and R94 together coordinate substrate. ATP contacts are provided by residues 95–97 (GLR), E105, and 130–136 (VRTVTAT).

This sequence belongs to the bacterial CoaD family. Homohexamer. It depends on Mg(2+) as a cofactor.

The protein resides in the cytoplasm. It catalyses the reaction (R)-4'-phosphopantetheine + ATP + H(+) = 3'-dephospho-CoA + diphosphate. It participates in cofactor biosynthesis; coenzyme A biosynthesis; CoA from (R)-pantothenate: step 4/5. Reversibly transfers an adenylyl group from ATP to 4'-phosphopantetheine, yielding dephospho-CoA (dPCoA) and pyrophosphate. This is Phosphopantetheine adenylyltransferase from Chelativorans sp. (strain BNC1).